Reading from the N-terminus, the 380-residue chain is Cytochrome b (380 aa).

A run of 4 helical transmembrane segments spans residues 33–53, 77–98, 113–133, and 178–198; these read FGSL…FLAM, WLIR…FLHV, WNMG…GYVL, and FFAF…VHLL. 2 residues coordinate heme b: H83 and H97. Residues H182 and H196 each contribute to the heme b site. A ubiquinone is bound at residue H201. 4 helical membrane-spanning segments follow: residues 226–246, 288–308, 320–340, and 347–367; these read IKDF…TLFF, LGGV…PLLH, ITQT…WIGG, and FIII…ILMP.

This sequence belongs to the cytochrome b family. As to quaternary structure, the cytochrome bc1 complex contains 11 subunits: 3 respiratory subunits (MT-CYB, CYC1 and UQCRFS1), 2 core proteins (UQCRC1 and UQCRC2) and 6 low-molecular weight proteins (UQCRH/QCR6, UQCRB/QCR7, UQCRQ/QCR8, UQCR10/QCR9, UQCR11/QCR10 and a cleavage product of UQCRFS1). This cytochrome bc1 complex then forms a dimer. Heme b is required as a cofactor.

The protein localises to the mitochondrion inner membrane. In terms of biological role, component of the ubiquinol-cytochrome c reductase complex (complex III or cytochrome b-c1 complex) that is part of the mitochondrial respiratory chain. The b-c1 complex mediates electron transfer from ubiquinol to cytochrome c. Contributes to the generation of a proton gradient across the mitochondrial membrane that is then used for ATP synthesis. The polypeptide is Cytochrome b (MT-CYB) (Microtus guentheri (Gunther's vole)).